We begin with the raw amino-acid sequence, 145 residues long: Deoxyuridine 5'-triphosphate nucleotidohydrolase (145 aa).

Residues 65 to 67, N78, 82 to 84, and M92 each bind substrate; these read RSG and TID.

This sequence belongs to the dUTPase family. Mg(2+) is required as a cofactor.

It catalyses the reaction dUTP + H2O = dUMP + diphosphate + H(+). It functions in the pathway pyrimidine metabolism; dUMP biosynthesis; dUMP from dCTP (dUTP route): step 2/2. Its function is as follows. This enzyme is involved in nucleotide metabolism: it produces dUMP, the immediate precursor of thymidine nucleotides and it decreases the intracellular concentration of dUTP so that uracil cannot be incorporated into DNA. The protein is Deoxyuridine 5'-triphosphate nucleotidohydrolase of Chlorobium phaeobacteroides (strain BS1).